The chain runs to 326 residues: Phospho-N-acetylmuramoyl-pentapeptide-transferase (326 aa).

9 helical membrane-spanning segments follow: residues 3-23, 51-71, 79-99, 115-135, 138-158, 169-189, 195-215, 221-243, and 306-326; these read ISISAGVVTFLITLVGIPAFI, TMGGLVFLIAAVVVSFLLALF, VGMILFILVLYGLVGFLDDFL, LALQLLGGVIFYLFYERGGDM, VFSYQVHLGIFYIIFALFWLV, GIDGLASISVVISLSAYGVIA, MDILLVILAMIGGLLGFFVFN, VFMGDVGSLALGGMLAAISMALH, and FFFWGVGLLASLLTLAILYLM.

The protein belongs to the glycosyltransferase 4 family. MraY subfamily. The cofactor is Mg(2+).

The protein resides in the cell membrane. It catalyses the reaction UDP-N-acetyl-alpha-D-muramoyl-L-alanyl-gamma-D-glutamyl-L-lysyl-D-alanyl-D-alanine + di-trans,octa-cis-undecaprenyl phosphate = Mur2Ac(oyl-L-Ala-gamma-D-Glu-L-Lys-D-Ala-D-Ala)-di-trans,octa-cis-undecaprenyl diphosphate + UMP. The protein operates within cell wall biogenesis; peptidoglycan biosynthesis. Catalyzes the initial step of the lipid cycle reactions in the biosynthesis of the cell wall peptidoglycan: transfers peptidoglycan precursor phospho-MurNAc-pentapeptide from UDP-MurNAc-pentapeptide onto the lipid carrier undecaprenyl phosphate, yielding undecaprenyl-pyrophosphoryl-MurNAc-pentapeptide, known as lipid I. This is Phospho-N-acetylmuramoyl-pentapeptide-transferase from Streptococcus pneumoniae (strain ATCC 700669 / Spain 23F-1).